The sequence spans 973 residues: EF-hand calcium-binding domain-containing protein 13 (973 aa).

A disordered region spans residues 384 to 448 (YSKNGINFKK…HSSLQKQVSS (65 aa)). The segment covering 396-405 (EKGEIHDSKS) has biased composition (basic and acidic residues). Residues 406 to 418 (KPQSLKSSTSLSK) show a composition bias toward low complexity. 6 EF-hand domains span residues 488–523 (LLDE…ERSF), 524–559 (PECN…FGIY), 633–668 (LKKD…MRDA), 756–791 (PKVN…LNVN), 792–827 (LTEE…SPHF), and 864–899 (TANA…ILTI).

This chain is EF-hand calcium-binding domain-containing protein 13 (EFCAB13), found in Homo sapiens (Human).